Reading from the N-terminus, the 299-residue chain is Tyrosine recombinase XerC (299 aa).

The Core-binding (CB) domain maps to 1–85 (MERQLEAYCA…AVRGLYRYLN (85 aa)). Residues 106–285 (RLPKVLDTDR…DFQHLAAVYD (180 aa)) form the Tyr recombinase domain. Active-site residues include Arg146, Lys170, His237, Arg240, and His263. Residue Tyr272 is the O-(3'-phospho-DNA)-tyrosine intermediate of the active site.

Belongs to the 'phage' integrase family. XerC subfamily. As to quaternary structure, forms a cyclic heterotetrameric complex composed of two molecules of XerC and two molecules of XerD.

Its subcellular location is the cytoplasm. In terms of biological role, site-specific tyrosine recombinase, which acts by catalyzing the cutting and rejoining of the recombining DNA molecules. The XerC-XerD complex is essential to convert dimers of the bacterial chromosome into monomers to permit their segregation at cell division. It also contributes to the segregational stability of plasmids. The sequence is that of Tyrosine recombinase XerC from Pseudomonas putida (strain W619).